The chain runs to 457 residues: Proton-translocating ferredoxin:NAD(+) oxidoreductase complex subunit C (457 aa).

2 consecutive 4Fe-4S ferredoxin-type domains span residues 353-386 (TKNDVNDGKESSCIRCGRCLKACPMHLNPSMLSI) and 396-427 (AKEEYNLLDCVECGSCVYTCPAKRKIVQYIRY). [4Fe-4S] cluster contacts are provided by C365, C368, C371, C375, C405, C408, C411, and C415. The interval 433–457 (RAAGEREKAKAAKAKEKKEKEEVLK) is disordered.

This sequence belongs to the 4Fe4S bacterial-type ferredoxin family. RnfC subfamily. In terms of assembly, the complex is composed of six subunits: RnfA, RnfB, RnfC, RnfD, RnfE and RnfG. The cofactor is [4Fe-4S] cluster.

It localises to the cell membrane. Functionally, part of a membrane-bound complex that couples electron transfer with translocation of ions across the membrane. Couples electron transfer from reduced ferredoxin to NAD(+) with translocation of H(+) out of the cell. Essential for energy conservation during autotrophic growth. Contributes to ATP synthesis during heterotrophic growth. This chain is Proton-translocating ferredoxin:NAD(+) oxidoreductase complex subunit C, found in Clostridium ljungdahlii (strain ATCC 55383 / DSM 13528 / PETC).